The following is a 101-amino-acid chain: Integration host factor subunit beta (101 aa).

The protein belongs to the bacterial histone-like protein family. In terms of assembly, heterodimer of an alpha and a beta chain.

Functionally, this protein is one of the two subunits of integration host factor, a specific DNA-binding protein that functions in genetic recombination as well as in transcriptional and translational control. This chain is Integration host factor subunit beta, found in Maricaulis maris (strain MCS10) (Caulobacter maris).